The primary structure comprises 968 residues: Breast cancer anti-estrogen resistance protein 1 (968 aa).

Methionine 1 carries the N-acetylmethionine modification. In terms of domain architecture, SH3 spans 97–159 (DKNVLAKALY…PGNRLKILVG (63 aa)). The interval 164-277 (KPAAPGPGPP…GPGSPAQDIY (114 aa)) is disordered. Residues 167-182 (APGPGPPATPPQPQPS) show a composition bias toward pro residues. The substrate for kinases stretch occupies residues 213-514 (YLVPTPSKTQ…DGVYAVPPPA (302 aa)). Tyrosine 226 carries the phosphotyrosine; by SRC modification. Residues 233–249 (PQFQSPPAKQTSTFSKQ) are compositionally biased toward polar residues. At serine 237 the chain carries Phosphoserine. Tyrosine 332 carries the post-translational modification Phosphotyrosine. Residue tyrosine 347 is modified to Phosphotyrosine; by ABL1. Threonine 367 carries the phosphothreonine modification. Serine 390 is modified (phosphoserine). The tract at residues 393–416 (KGLPPSNHHSVYDVPPSVSKDVPD) is disordered. Phosphotyrosine is present on residues tyrosine 460, tyrosine 470, and tyrosine 508. Disordered regions lie at residues 503 to 544 (IDDG…SLEV) and 705 to 756 (RTKA…NSEG). The span at 514-524 (AEREAPTDGKR) shows a compositional bias: basic and acidic residues. Over residues 525-542 (LSASSTGSTRSSQSASSL) the composition is skewed to low complexity. Phosphoserine occurs at positions 526, 535, and 737. Positions 715 to 753 (GSSSLHLNPTDKASSIQSRPLPSPPKFTSQDSPDGQYEN) are enriched in polar residues. An SH3-binding motif is present at residues 733–741 (RPLPSPPKF). Positions 844 to 894 (FYLEQCEANLTTLTDAVDAFFTAVATNQPPKIFVAHSKFVILSAHKLVFIG) are divergent helix-loop-helix motif.

It belongs to the CAS family. Forms complexes in vivo with PTK2/FAK1, adapter protein CRKL and LYN kinase. Can heterodimerize with NEDD9. Component of a complex comprised of SH2D3C, BCAR1/CAS, and CRK. Within the complex, interacts with SH2D3C (via C-terminus), and CRK. Part of a complex comprised of PTPRA, BCAR1, BCAR3 (via SH2 domain) and SRC; the formation of the complex is dependent on integrin mediated-tyrosine phosphorylation of PTPRA. Interacts with BCAR3 (via Ras-GEF domain); the interaction regulates adhesion-dependent serine phosphorylation. Interacts with SMAD2 and SMAD3. Interacts with NPHP1. Interacts with PTK2B/PYK2. Interacts (via C-terminus) with SH2D3C/CHAT isoform 2 (via C-terminus). Interacts with activated CSPG4. Interacts with BMX, INPPL1/SHIP2 and PEAK1. Part of a collagen stimulated complex involved in cell migration composed of CDC42, CRK, TNK2 and BCAR1/p130cas. Interacts with TNK2 via SH3 domains. Interacts with PTK2B/PYK2. Interacts (when tyrosine-phosphorylated) with tensin TNS1; the interaction is increased by phosphorylation of TNS1. PTK2/FAK1 activation mediates phosphorylation at the YDYVHL motif; phosphorylation is most likely catalyzed by SRC family members. SRC-family kinases are recruited to the phosphorylated sites and can phosphorylate other tyrosine residues. Tyrosine phosphorylation is triggered by integrin mediated adhesion of cells to the extracellular matrix. In terms of processing, phosphorylated by SRC kinase in a EDN1- and PTK2B-mediated manner; phosphorylation strengthens its interaction with BCAR3 as part of the PTK2B/BCAR1/BCAR3/RAP1 signaling pathway. Post-translationally, dephosphorylated by PTPN14 at Tyr-226. As to expression, widely expressed. Higher expression in lung, intestine and testis.

Its subcellular location is the cell junction. The protein resides in the focal adhesion. The protein localises to the cytoplasm. It is found in the cell projection. It localises to the axon. Its function is as follows. Docking protein which plays a central coordinating role for tyrosine-kinase-based signaling related to cell adhesion. Implicated in induction of cell migration and cell branching. Involved in the BCAR3-mediated inhibition of TGFB signaling. The chain is Breast cancer anti-estrogen resistance protein 1 (Bcar1) from Rattus norvegicus (Rat).